A 446-amino-acid chain; its full sequence is Cyclin-T1-1 (446 aa).

The protein belongs to the cyclin family. Cyclin T subfamily.

The protein is Cyclin-T1-1 (CYCT1-1) of Oryza sativa subsp. japonica (Rice).